We begin with the raw amino-acid sequence, 446 residues long: ATP-dependent protease ATPase subunit HslU (446 aa).

ATP-binding positions include Val-18, 60 to 65 (GVGKTE), Asp-259, Glu-324, and Arg-396.

It belongs to the ClpX chaperone family. HslU subfamily. A double ring-shaped homohexamer of HslV is capped on each side by a ring-shaped HslU homohexamer. The assembly of the HslU/HslV complex is dependent on binding of ATP.

The protein resides in the cytoplasm. Functionally, ATPase subunit of a proteasome-like degradation complex; this subunit has chaperone activity. The binding of ATP and its subsequent hydrolysis by HslU are essential for unfolding of protein substrates subsequently hydrolyzed by HslV. HslU recognizes the N-terminal part of its protein substrates and unfolds these before they are guided to HslV for hydrolysis. The protein is ATP-dependent protease ATPase subunit HslU of Dechloromonas aromatica (strain RCB).